The following is a 452-amino-acid chain: Chromosomal replication initiator protein DnaA (452 aa).

The segment at 1–73 (MSPNSTLWQT…NELATKYSST (73 aa)) is domain I, interacts with DnaA modulators. Positions 73-102 (TPVRLKFVSQEEVIEEPVADRKLTIDYRQG) are domain II. The interval 103 to 323 (NLNSTYTFDS…GALIRLISYA (221 aa)) is domain III, AAA+ region. Residues G147, G149, K150, and T151 each contribute to the ATP site. The interval 324-452 (QTFNLEITMN…VKKIDSPLLK (129 aa)) is domain IV, binds dsDNA.

It belongs to the DnaA family. As to quaternary structure, oligomerizes as a right-handed, spiral filament on DNA at oriC.

It localises to the cytoplasm. Its function is as follows. Plays an essential role in the initiation and regulation of chromosomal replication. ATP-DnaA binds to the origin of replication (oriC) to initiate formation of the DNA replication initiation complex once per cell cycle. Binds the DnaA box (a 9 base pair repeat at the origin) and separates the double-stranded (ds)DNA. Forms a right-handed helical filament on oriC DNA; dsDNA binds to the exterior of the filament while single-stranded (ss)DNA is stabiized in the filament's interior. The ATP-DnaA-oriC complex binds and stabilizes one strand of the AT-rich DNA unwinding element (DUE), permitting loading of DNA polymerase. After initiation quickly degrades to an ADP-DnaA complex that is not apt for DNA replication. Binds acidic phospholipids. In Acholeplasma laidlawii (strain PG-8A), this protein is Chromosomal replication initiator protein DnaA.